The chain runs to 46 residues: Esculentin-1GRa (46 aa).

As to expression, expressed by the skin glands.

It localises to the secreted. In terms of biological role, antimicrobial peptide active against the Gram-positive bacterium S.aureus (MIC=12.5 uM) and against the Gram-negative bacterium E.coli (MIC=6 uM). Has no antifungal activity against C.albicans. Shows hemolytic activity against human erythrocytes only at high concentrations (LC(50)=210 uM). In Odorrana grahami (Yunnanfu frog), this protein is Esculentin-1GRa.